A 1263-amino-acid chain; its full sequence is DNA topoisomerase 2 (1263 aa).

Residues asparagine 80, asparagine 109, 137–139 (STN), and 150–157 (GKNGFGAK) each bind ATP. Positions 329–331 (VKK) are interaction with DNA. 362–364 (QTK) provides a ligand contact to ATP. In terms of domain architecture, Toprim spans 439-553 (CTLILTEGDS…SLVKYEGFIQ (115 aa)). Glutamate 445, aspartate 522, and aspartate 524 together coordinate Mg(2+). In terms of domain architecture, Topo IIA-type catalytic spans 737–1223 (VPNLMDGFKP…SPEEIWEEEL (487 aa)). Tyrosine 828 serves as the catalytic O-(5'-phospho-DNA)-tyrosine intermediate. Positions 977–1015 (KKASKAVSSAKNTKTTTKAGSKTGSRTRKNPALAKKSQK) are disordered. Residues 981–1000 (KAVSSAKNTKTTTKAGSKTG) are compositionally biased toward low complexity. The segment at 1068-1077 (KLVKPLNLTN) is interaction with DNA. The interval 1244–1263 (LLNKKKGSTGKKSRKTSTQK) is disordered. Over residues 1247 to 1263 (KKKGSTGKKSRKTSTQK) the composition is skewed to basic residues.

This sequence belongs to the type II topoisomerase family. Mg(2+) serves as cofactor. Mn(2+) is required as a cofactor. The cofactor is Ca(2+).

The enzyme catalyses ATP-dependent breakage, passage and rejoining of double-stranded DNA.. Its function is as follows. Can introduce negative superhelical turns into double-stranded circular DNA. The polypeptide is DNA topoisomerase 2 (TOP2) (Acanthamoeba polyphaga (Amoeba)).